A 128-amino-acid chain; its full sequence is Large ribosomal subunit protein uL24 (128 aa).

Residues 105–128 (KAKSRQVGKEKGKYKEETIEKMQE) are disordered.

This sequence belongs to the universal ribosomal protein uL24 family. As to quaternary structure, component of the large ribosomal subunit.

It localises to the cytoplasm. Functionally, component of the large ribosomal subunit. The ribosome is a large ribonucleoprotein complex responsible for the synthesis of proteins in the cell. This chain is Large ribosomal subunit protein uL24 (RPL26), found in Gallus gallus (Chicken).